A 124-amino-acid polypeptide reads, in one-letter code: Immunoglobulin lambda variable 5-52 (124 aa).

The N-terminal stretch at 1–19 is a signal peptide; sequence MAWTLLLLVLLSHCTGSLS. The tract at residues 20–44 is framework-1; that stretch reads QPVLTQPSSHSASSGASVRLTCMLS. Positions 21 to 124 constitute an Ig-like domain; the sequence is PVLTQPSSHS…CGTWHSNSKT (104 aa). A disulfide bond links C41 and C115. Residues 45–53 are complementarity-determining-1; it reads SGFSVGDFW. Residues 54–70 form a framework-2 region; the sequence is IRWYQQKPGNPPRYLLY. The tract at residues 71–77 is complementarity-determining-2; the sequence is YHSDSNK. The framework-3 stretch occupies residues 78–115; the sequence is GQGSGVPSRFSGSNDASANAGILRISGLQPEDEADYYC. The tract at residues 116-124 is complementarity-determining-3; the sequence is GTWHSNSKT.

In terms of assembly, immunoglobulins are composed of two identical heavy chains and two identical light chains; disulfide-linked.

The protein resides in the secreted. Its subcellular location is the cell membrane. In terms of biological role, v region of the variable domain of immunoglobulin light chains that participates in the antigen recognition. Immunoglobulins, also known as antibodies, are membrane-bound or secreted glycoproteins produced by B lymphocytes. In the recognition phase of humoral immunity, the membrane-bound immunoglobulins serve as receptors which, upon binding of a specific antigen, trigger the clonal expansion and differentiation of B lymphocytes into immunoglobulins-secreting plasma cells. Secreted immunoglobulins mediate the effector phase of humoral immunity, which results in the elimination of bound antigens. The antigen binding site is formed by the variable domain of one heavy chain, together with that of its associated light chain. Thus, each immunoglobulin has two antigen binding sites with remarkable affinity for a particular antigen. The variable domains are assembled by a process called V-(D)-J rearrangement and can then be subjected to somatic hypermutations which, after exposure to antigen and selection, allow affinity maturation for a particular antigen. The sequence is that of Immunoglobulin lambda variable 5-52 from Homo sapiens (Human).